The primary structure comprises 593 residues: NADH-quinone oxidoreductase subunit C/D (593 aa).

Residues 1–184 (MTADNAIFIP…DPYSLTLAKQ (184 aa)) form an NADH dehydrogenase I subunit C region. Positions 208–593 (DYMFLNLGPN…IDFVMADVDR (386 aa)) are NADH dehydrogenase I subunit D.

It in the N-terminal section; belongs to the complex I 30 kDa subunit family. This sequence in the C-terminal section; belongs to the complex I 49 kDa subunit family. In terms of assembly, NDH-1 is composed of 13 different subunits. Subunits NuoB, CD, E, F, and G constitute the peripheral sector of the complex.

The protein localises to the cell inner membrane. It carries out the reaction a quinone + NADH + 5 H(+)(in) = a quinol + NAD(+) + 4 H(+)(out). Its function is as follows. NDH-1 shuttles electrons from NADH, via FMN and iron-sulfur (Fe-S) centers, to quinones in the respiratory chain. The immediate electron acceptor for the enzyme in this species is believed to be ubiquinone. Couples the redox reaction to proton translocation (for every two electrons transferred, four hydrogen ions are translocated across the cytoplasmic membrane), and thus conserves the redox energy in a proton gradient. The sequence is that of NADH-quinone oxidoreductase subunit C/D from Pseudomonas putida (strain ATCC 700007 / DSM 6899 / JCM 31910 / BCRC 17059 / LMG 24140 / F1).